A 159-amino-acid polypeptide reads, in one-letter code: Eukaryotic translation initiation factor 5A (159 aa).

Residue K55 is modified to Hypusine.

Belongs to the eIF-5A family. Lys-55 undergoes hypusination, a unique post-translational modification that consists in the addition of a butylamino group from spermidine to lysine side chain, leading to the formation of the unusual amino acid hypusine. eIF-5As are the only known proteins to undergo this modification, which is essential for their function.

The protein localises to the cytoplasm. Its function is as follows. Translation factor that promotes translation elongation and termination, particularly upon ribosome stalling at specific amino acid sequence contexts. Binds between the exit (E) and peptidyl (P) site of the ribosome and promotes rescue of stalled ribosome: specifically required for efficient translation of polyproline-containing peptides as well as other motifs that stall the ribosome. Acts as a ribosome quality control (RQC) cofactor by joining the RQC complex to facilitate peptidyl transfer during CAT tailing step. The chain is Eukaryotic translation initiation factor 5A (eif5a) from Dictyostelium discoideum (Social amoeba).